The chain runs to 89 residues: Small ribosomal subunit protein uS15 (89 aa).

It belongs to the universal ribosomal protein uS15 family. As to quaternary structure, part of the 30S ribosomal subunit. Forms a bridge to the 50S subunit in the 70S ribosome, contacting the 23S rRNA.

In terms of biological role, one of the primary rRNA binding proteins, it binds directly to 16S rRNA where it helps nucleate assembly of the platform of the 30S subunit by binding and bridging several RNA helices of the 16S rRNA. Its function is as follows. Forms an intersubunit bridge (bridge B4) with the 23S rRNA of the 50S subunit in the ribosome. This chain is Small ribosomal subunit protein uS15, found in Bdellovibrio bacteriovorus (strain ATCC 15356 / DSM 50701 / NCIMB 9529 / HD100).